The following is a 308-amino-acid chain: Putative mitochondrial transporter UCP3 (308 aa).

Topologically, residues 1–10 (MVGLQPSEVP) are mitochondrial intermembrane. A helical transmembrane segment spans residues 11 to 32 (PTTVVKFLGAGTAACFADLLTF). Solcar repeat units lie at residues 11–102 (PTTV…VKQF), 111–202 (SSVA…IKEK), and 211–296 (DNFP…LKRA). Residues 33-73 (PLDTAKVRLQIQGENPGVQSVQYRGVLGTILTMVRTEGPRS) lie on the Mitochondrial matrix side of the membrane. A helical membrane pass occupies residues 74–96 (PYSGLVAGLHRQMSFASIRIGLY). The Mitochondrial intermembrane segment spans residues 97 to 116 (DSVKQFYTPKGTDHSSVAIR). A helical membrane pass occupies residues 117-133 (ILAGCTTGAMAVTCAQP). Topologically, residues 134 to 179 (TDVVKVRFQAMIRLGTGGERKYRGTMDAYRTIAREEGVRGLWKGTW) are mitochondrial matrix. Residues 180-196 (PNITRNAIVNCAEMVTY) traverse the membrane as a helical segment. The Mitochondrial intermembrane portion of the chain corresponds to 197–213 (DIIKEKLLDSHLFTDNF). A helical transmembrane segment spans residues 214–233 (PCHFVSAFGAGFCATVVASP). Topologically, residues 234 to 267 (VDVVKTRYMNAPPGRYRSPLHCMLRMVAQEGPTA) are mitochondrial matrix. The helical transmembrane segment at 268-290 (FYKGFMPSFLRLGSWNVMMFVTY) threads the bilayer. Residues 275–297 (SFLRLGSWNVMMFVTYEQLKRAL) are purine nucleotide binding. The Mitochondrial intermembrane portion of the chain corresponds to 291-308 (EQLKRALMKVQVLRESPF).

This sequence belongs to the mitochondrial carrier (TC 2.A.29) family. In terms of assembly, interacts with HAX1; the interaction is direct and calcium-dependent.

The protein localises to the mitochondrion inner membrane. Its function is as follows. Putative transmembrane transporter that plays a role in mitochondrial metabolism via an as yet unclear mechanism. Originally, this mitochondrial protein was thought to act as a proton transmembrane transporter from the mitochondrial intermembrane space into the matrix, causing proton leaks through the inner mitochondrial membrane, thereby uncoupling mitochondrial membrane potential generation from ATP synthesis. However, this function is controversial and uncoupling may not be the function, or at least not the main function, but rather a consequence of more conventional metabolite transporter activity. The chain is Putative mitochondrial transporter UCP3 from Rattus norvegicus (Rat).